A 648-amino-acid chain; its full sequence is Mitochondrial Rho GTPase 3 (648 aa).

Over 1–621 (MWMGVGDSSG…KRSCKLNNRS (621 aa)) the chain is Cytoplasmic. Ser-11 is subject to Phosphoserine. In terms of domain architecture, Miro 1 spans 12-179 (PKPIRIVVVG…LYYAQKAVID (168 aa)). EF-hand domains follow at residues 195–230 (RCIA…CFDT) and 316–351 (VAIE…APES). Positions 208, 210, 212, 219, 329, 331, 333, 335, and 340 each coordinate Ca(2+). A Miro 2 domain is found at 425-599 (RKVVQCFVFG…FRKILTAAEN (175 aa)). The helical transmembrane segment at 622-644 (LMAVSIGTAVLIAGLASFRLYTA) threads the bilayer. The Mitochondrial intermembrane portion of the chain corresponds to 645 to 648 (RKQS).

Belongs to the mitochondrial Rho GTPase family. As to expression, expressed at very low levels in roots, leaves, stems, flowers and siliques.

The protein localises to the mitochondrion outer membrane. Its function is as follows. Mitochondrial GTPase that may be involved in mitochondrion development. The chain is Mitochondrial Rho GTPase 3 from Arabidopsis thaliana (Mouse-ear cress).